A 511-amino-acid chain; its full sequence is Lysine--tRNA ligase (511 aa).

Mg(2+)-binding residues include glutamate 403 and glutamate 410.

Belongs to the class-II aminoacyl-tRNA synthetase family. As to quaternary structure, homodimer. It depends on Mg(2+) as a cofactor.

The protein localises to the cytoplasm. The catalysed reaction is tRNA(Lys) + L-lysine + ATP = L-lysyl-tRNA(Lys) + AMP + diphosphate. In Onion yellows phytoplasma (strain OY-M), this protein is Lysine--tRNA ligase.